Reading from the N-terminus, the 419-residue chain is Histidine--tRNA ligase (419 aa).

Belongs to the class-II aminoacyl-tRNA synthetase family. Homodimer.

It is found in the cytoplasm. It carries out the reaction tRNA(His) + L-histidine + ATP = L-histidyl-tRNA(His) + AMP + diphosphate + H(+). This is Histidine--tRNA ligase from Desulforamulus reducens (strain ATCC BAA-1160 / DSM 100696 / MI-1) (Desulfotomaculum reducens).